The primary structure comprises 62 residues: uncharacterized protein (62 aa).

Residues 1–22 (MVNVALLLDQIIATPLRSMVEA) form the signal peptide.

This is an uncharacterized protein from Archaeoglobus fulgidus (strain ATCC 49558 / DSM 4304 / JCM 9628 / NBRC 100126 / VC-16).